We begin with the raw amino-acid sequence, 183 residues long: Small ribosomal subunit protein uS4 (183 aa).

Residues 106-168 (RRLETLVYKK…ETSPFTDENH (63 aa)) enclose the S4 RNA-binding domain. Positions 158-183 (NETSPFTDENHPLRMEMSGTKEEENE) are disordered. Residues 165 to 183 (DENHPLRMEMSGTKEEENE) show a composition bias toward basic and acidic residues.

Belongs to the universal ribosomal protein uS4 family. Part of the 30S ribosomal subunit. Contacts protein S5. The interaction surface between S4 and S5 is involved in control of translational fidelity.

One of the primary rRNA binding proteins, it binds directly to 16S rRNA where it nucleates assembly of the body of the 30S subunit. Its function is as follows. With S5 and S12 plays an important role in translational accuracy. The sequence is that of Small ribosomal subunit protein uS4 from Picrophilus torridus (strain ATCC 700027 / DSM 9790 / JCM 10055 / NBRC 100828 / KAW 2/3).